A 275-amino-acid polypeptide reads, in one-letter code: Tryptophan synthase alpha chain (275 aa).

Catalysis depends on proton acceptor residues E58 and D69.

This sequence belongs to the TrpA family. In terms of assembly, tetramer of two alpha and two beta chains. As to expression, ubiquitously expressed at low levels in seedlings, roots, hypocotyls, cotyledons, stems, leaves, inflorescences, flowers, siliques and seeds.

It is found in the cytoplasm. The enzyme catalyses (1S,2R)-1-C-(indol-3-yl)glycerol 3-phosphate + L-serine = D-glyceraldehyde 3-phosphate + L-tryptophan + H2O. It carries out the reaction (1S,2R)-1-C-(indol-3-yl)glycerol 3-phosphate = indole + D-glyceraldehyde 3-phosphate. It participates in amino-acid biosynthesis; L-tryptophan biosynthesis; L-tryptophan from chorismate: step 5/5. Functionally, the alpha subunit is responsible for the aldol cleavage of indoleglycerol phosphate to indole and glyceraldehyde 3-phosphate. Contributes to the tryptophan-independent indole biosynthesis, and possibly to auxin production. In Arabidopsis thaliana (Mouse-ear cress), this protein is Tryptophan synthase alpha chain (TRPA1).